A 262-amino-acid polypeptide reads, in one-letter code: Virulence plasmid protein pGP6-D-related protein (262 aa).

Belongs to the UPF0137 (pGP6-D) family.

In Chlamydia muridarum (strain MoPn / Nigg), this protein is Virulence plasmid protein pGP6-D-related protein.